Here is a 150-residue protein sequence, read N- to C-terminus: 6,7-dimethyl-8-ribityllumazine synthase (150 aa).

Residues F11, 43 to 45, and 67 to 69 contribute to the 5-amino-6-(D-ribitylamino)uracil site; these read TYE and AVI. A (2S)-2-hydroxy-3-oxobutyl phosphate-binding site is contributed by 72–73; it reads AT. Catalysis depends on H75, which acts as the Proton donor. L100 lines the 5-amino-6-(D-ribitylamino)uracil pocket. (2S)-2-hydroxy-3-oxobutyl phosphate is bound at residue R115.

Belongs to the DMRL synthase family.

It catalyses the reaction (2S)-2-hydroxy-3-oxobutyl phosphate + 5-amino-6-(D-ribitylamino)uracil = 6,7-dimethyl-8-(1-D-ribityl)lumazine + phosphate + 2 H2O + H(+). It participates in cofactor biosynthesis; riboflavin biosynthesis; riboflavin from 2-hydroxy-3-oxobutyl phosphate and 5-amino-6-(D-ribitylamino)uracil: step 1/2. Catalyzes the formation of 6,7-dimethyl-8-ribityllumazine by condensation of 5-amino-6-(D-ribitylamino)uracil with 3,4-dihydroxy-2-butanone 4-phosphate. This is the penultimate step in the biosynthesis of riboflavin. The polypeptide is 6,7-dimethyl-8-ribityllumazine synthase (Staphylothermus marinus (strain ATCC 43588 / DSM 3639 / JCM 9404 / F1)).